Reading from the N-terminus, the 345-residue chain is Phosphoribosylformylglycinamidine cyclo-ligase (345 aa).

This sequence belongs to the AIR synthase family.

It is found in the cytoplasm. It catalyses the reaction 2-formamido-N(1)-(5-O-phospho-beta-D-ribosyl)acetamidine + ATP = 5-amino-1-(5-phospho-beta-D-ribosyl)imidazole + ADP + phosphate + H(+). It participates in purine metabolism; IMP biosynthesis via de novo pathway; 5-amino-1-(5-phospho-D-ribosyl)imidazole from N(2)-formyl-N(1)-(5-phospho-D-ribosyl)glycinamide: step 2/2. The polypeptide is Phosphoribosylformylglycinamidine cyclo-ligase (Shewanella sp. (strain ANA-3)).